A 433-amino-acid chain; its full sequence is MLVTRPLLSPEWVARLKQFKKLIVGFSGGLDSTVLLHVLASTPPLSNQLLAVHINHGISGNSLNWQRHCEQLCLDLGIAFIAKAIEFDRSANVEEAARNARYDFFSSLLEDNDCLVLGHHLDDQAETVLLQLFRGAGVDGLAAMQECSNLGAGQLARPFLTCPRVELEHYARIHELKWIEDESNQDTKYSRNYLRHRVMPLLLEKWPGVAGNISRAATHCQQAKANLEVLAIKDCPDLLNATDHLLIEPIKGLEFERITNVLKFWLKKNRIQLPSSKTFHRIIHEIIFAKLDAMPTVSWNQIQVRRFQQHLYLLKADQINLPKAIKWQQFPASLTYPDADIKLSAVKAQKGLMIPKDAQIEIRFRKGGEEIYWHGQTKHLKKLFQEWQIPPWVRDRVPLVYINDQLACVVGYAVSDLFFTTNPLEAWSIVNNS.

27–32 serves as a coordination point for ATP; sequence SGGLDS.

This sequence belongs to the tRNA(Ile)-lysidine synthase family.

The protein localises to the cytoplasm. It catalyses the reaction cytidine(34) in tRNA(Ile2) + L-lysine + ATP = lysidine(34) in tRNA(Ile2) + AMP + diphosphate + H(+). Ligates lysine onto the cytidine present at position 34 of the AUA codon-specific tRNA(Ile) that contains the anticodon CAU, in an ATP-dependent manner. Cytidine is converted to lysidine, thus changing the amino acid specificity of the tRNA from methionine to isoleucine. This chain is tRNA(Ile)-lysidine synthase, found in Legionella pneumophila subsp. pneumophila (strain Philadelphia 1 / ATCC 33152 / DSM 7513).